A 525-amino-acid chain; its full sequence is Sensory neuron membrane protein 1 (525 aa).

The Cytoplasmic portion of the chain corresponds to 1–11 (MLLPKELKYAA). A helical transmembrane segment spans residues 12-32 (IAGGVAVFGLIFGWVLFPVIL). Residues 33–456 (KGQLKKEMAL…LKHQLFIPKR (424 aa)) are Extracellular-facing. N-linked (GlcNAc...) asparagine glycans are attached at residues Asn-67, Asn-229, and Asn-324. 3 cysteine pairs are disulfide-bonded: Cys-268–Cys-333, Cys-297–Cys-352, and Cys-335–Cys-341. An N-linked (GlcNAc...) asparagine glycan is attached at Asn-440. Residues 457–477 (VVGVLRWWMVSFGSLGADIGI) form a helical membrane-spanning segment. Over 478–525 (VYHFRDHIMRLAVSGDTKVSKVTPEEDPEQKDISVIGPPAQEPAKINI) the chain is Cytoplasmic. Positions 497 to 525 (SKVTPEEDPEQKDISVIGPPAQEPAKINI) are disordered.

It belongs to the CD36 family.

It is found in the cell membrane. Plays an olfactory role that is not restricted to pheromone sensitivity. This chain is Sensory neuron membrane protein 1, found in Mamestra brassicae (Cabbage moth).